The sequence spans 550 residues: Alkaline phosphatase PhoV (550 aa).

The N-terminal stretch at 1–20 (MKIKLLCISLAVLFCSSANA) is a signal peptide. 2 residues coordinate Zn(2+): Asp48 and Thr89. Residue Thr89 is the Phosphothreonine intermediate of the active site. Substrate is bound by residues Asn110 and 171 to 173 (KDR). Zn(2+)-binding residues include Asp313, His317, Asp360, His361, and His491.

The cofactor is Zn(2+).

Its subcellular location is the cell inner membrane. It carries out the reaction a phosphate monoester + H2O = an alcohol + phosphate. Its activity is regulated as follows. Subject to competitive inhibition by phosphate. Inhibited by manganese. Magnesium mildly increases enzyme activity when the zinc concentration is suboptimal. Optimal activity is dependent on the presence of 0.01-2% Triton X-100. Triton X-100 at a concentration of 0.05% increases the activity about fivefold relative to that in its absence. The enzyme is even active in Triton X-100 concentrations up to 80%. 50% inhibition by 4 mM EDTA and 50% inhibition by 48 mM sodium citrate. In terms of biological role, alkaline phosphatase with broad substrate specificity. This chain is Alkaline phosphatase PhoV, found in Synechococcus elongatus (strain ATCC 33912 / PCC 7942 / FACHB-805) (Anacystis nidulans R2).